An 88-amino-acid polypeptide reads, in one-letter code: Small ribosomal subunit protein uS17c (88 aa).

The protein belongs to the universal ribosomal protein uS17 family. In terms of assembly, part of the 30S ribosomal subunit.

It is found in the plastid. Its subcellular location is the cyanelle. One of the primary rRNA binding proteins, it binds specifically to the 5'-end of 16S ribosomal RNA. The sequence is that of Small ribosomal subunit protein uS17c (rps17) from Cyanophora paradoxa.